We begin with the raw amino-acid sequence, 122 residues long: Large ribosomal subunit protein uL14 (122 aa).

This sequence belongs to the universal ribosomal protein uL14 family. As to quaternary structure, part of the 50S ribosomal subunit. Forms a cluster with proteins L3 and L19. In the 70S ribosome, L14 and L19 interact and together make contacts with the 16S rRNA in bridges B5 and B8.

Functionally, binds to 23S rRNA. Forms part of two intersubunit bridges in the 70S ribosome. This is Large ribosomal subunit protein uL14 from Clostridium botulinum (strain Alaska E43 / Type E3).